Here is a 157-residue protein sequence, read N- to C-terminus: Small ribosomal subunit protein uS7 (157 aa).

Belongs to the universal ribosomal protein uS7 family. Part of the 30S ribosomal subunit. Contacts proteins S9 and S11.

In terms of biological role, one of the primary rRNA binding proteins, it binds directly to 16S rRNA where it nucleates assembly of the head domain of the 30S subunit. Is located at the subunit interface close to the decoding center, probably blocks exit of the E-site tRNA. The polypeptide is Small ribosomal subunit protein uS7 (Albidiferax ferrireducens (strain ATCC BAA-621 / DSM 15236 / T118) (Rhodoferax ferrireducens)).